The following is a 423-amino-acid chain: Diaminobutyrate--2-oxoglutarate transaminase (423 aa).

Residue K271 is modified to N6-(pyridoxal phosphate)lysine.

This sequence belongs to the class-III pyridoxal-phosphate-dependent aminotransferase family. The cofactor is pyridoxal 5'-phosphate.

The enzyme catalyses L-2,4-diaminobutanoate + 2-oxoglutarate = L-aspartate 4-semialdehyde + L-glutamate. The protein operates within amine and polyamine biosynthesis; ectoine biosynthesis; L-ectoine from L-aspartate 4-semialdehyde: step 1/3. Functionally, catalyzes reversively the conversion of L-aspartate beta-semialdehyde (ASA) to L-2,4-diaminobutyrate (DABA) by transamination with L-glutamate. The polypeptide is Diaminobutyrate--2-oxoglutarate transaminase (ectB) (Streptomyces avermitilis (strain ATCC 31267 / DSM 46492 / JCM 5070 / NBRC 14893 / NCIMB 12804 / NRRL 8165 / MA-4680)).